A 143-amino-acid polypeptide reads, in one-letter code: Hemoglobin subunit alpha (143 aa).

The Globin domain occupies 2–143; that stretch reads TLSDKDKSTV…VALALAERYR (142 aa). An O2-binding site is contributed by histidine 60. Histidine 89 lines the heme b pocket.

Belongs to the globin family. As to quaternary structure, heterotetramer of two alpha chains and two beta chains. As to expression, red blood cells.

In terms of biological role, involved in oxygen transport from gills to the various peripheral tissues. The protein is Hemoglobin subunit alpha (hba) of Thunnus thynnus (Atlantic bluefin tuna).